A 193-amino-acid polypeptide reads, in one-letter code: Potassium-transporting ATPase KdpC subunit (193 aa).

A helical transmembrane segment spans residues Ile-14 to Ala-34.

It belongs to the KdpC family. The system is composed of three essential subunits: KdpA, KdpB and KdpC.

Its subcellular location is the cell membrane. Its function is as follows. Part of the high-affinity ATP-driven potassium transport (or Kdp) system, which catalyzes the hydrolysis of ATP coupled with the electrogenic transport of potassium into the cytoplasm. This subunit acts as a catalytic chaperone that increases the ATP-binding affinity of the ATP-hydrolyzing subunit KdpB by the formation of a transient KdpB/KdpC/ATP ternary complex. This chain is Potassium-transporting ATPase KdpC subunit, found in Bacillus anthracis (strain A0248).